The chain runs to 150 residues: Arginine repressor (150 aa).

The protein belongs to the ArgR family.

The protein localises to the cytoplasm. Its pathway is amino-acid biosynthesis; L-arginine biosynthesis [regulation]. Functionally, regulates arginine biosynthesis genes. The polypeptide is Arginine repressor (Clostridium botulinum (strain Okra / Type B1)).